Consider the following 219-residue polypeptide: uncharacterized protein (219 aa).

It belongs to the CIA30 family.

The protein resides in the cytoplasm. It is found in the nucleus. This is an uncharacterized protein from Schizosaccharomyces pombe (strain 972 / ATCC 24843) (Fission yeast).